Consider the following 159-residue polypeptide: MYIAILKCESMGRCKHNGEVSIFGVRPASFPNFPFHLMDKIGGFVILDELWLRRWCEIIEYPMRIPTLYVPIEDYGIPTVEDMDLIVDFIKYHVSKEKEVVVSCIGGHGRTGTVLAVWAGLNGIKNPIEYVRERYCECAVETEEQEEFVIEYLKMKKRG.

This sequence to M.jannaschii MJECL20.

This is an uncharacterized protein from Methanocaldococcus jannaschii (strain ATCC 43067 / DSM 2661 / JAL-1 / JCM 10045 / NBRC 100440) (Methanococcus jannaschii).